The sequence spans 261 residues: MAVISMKQLLEAGVHFGHQTRRWNPKMAKYIFTERNGIHVIDLQQTVKLADQAYDFVRDAAANDAVILFVGTKKQASEAIKEEAERAGQYYINHRWLGGTLTNWDTIQKRIARLKEIKQMEVDGIFDVLPKKEVALLNKQRARLEKFLGGIEDMPRIPDIIYIVDPHKEQIAVKEAKKLGIPVVAMVDTNADPDDIDVIIPANDDAIRAVKLITSKLADAVIEGRQGEDSVEAVEAELAAGETQADSIEEIVEVVEGANEN.

The protein belongs to the universal ribosomal protein uS2 family.

This Streptococcus mutans serotype c (strain ATCC 700610 / UA159) protein is Small ribosomal subunit protein uS2.